The following is a 148-amino-acid chain: Ubiquitin-conjugating enzyme E2 30 (148 aa).

In terms of domain architecture, UBC core spans 1–147 (MASKRINKEL…AQSWTQKYAM (147 aa)). Cys-85 functions as the Glycyl thioester intermediate in the catalytic mechanism.

The protein belongs to the ubiquitin-conjugating enzyme family. As to quaternary structure, interacts with RGLG3 and RGLG4. Ubiquitously expressed at very low levels.

It carries out the reaction S-ubiquitinyl-[E1 ubiquitin-activating enzyme]-L-cysteine + [E2 ubiquitin-conjugating enzyme]-L-cysteine = [E1 ubiquitin-activating enzyme]-L-cysteine + S-ubiquitinyl-[E2 ubiquitin-conjugating enzyme]-L-cysteine.. Its pathway is protein modification; protein ubiquitination. In terms of biological role, accepts the ubiquitin from the E1 complex and catalyzes its covalent attachment to other proteins. In Arabidopsis thaliana (Mouse-ear cress), this protein is Ubiquitin-conjugating enzyme E2 30 (UBC30).